We begin with the raw amino-acid sequence, 509 residues long: Probable cytochrome P450 513A1 (509 aa).

A helical transmembrane segment spans residues 2-19; it reads NYLVGLVLIFTIFYFFLQ. Cys-454 provides a ligand contact to heme.

The protein belongs to the cytochrome P450 family. The cofactor is heme.

Its subcellular location is the membrane. The sequence is that of Probable cytochrome P450 513A1 (cyp513A1) from Dictyostelium discoideum (Social amoeba).